Consider the following 184-residue polypeptide: Ribosome-recycling factor (184 aa).

Residues 141-161 (KKNDKAISEDDQRKGQDDVQK) are disordered.

Belongs to the RRF family.

The protein resides in the cytoplasm. In terms of biological role, responsible for the release of ribosomes from messenger RNA at the termination of protein biosynthesis. May increase the efficiency of translation by recycling ribosomes from one round of translation to another. The sequence is that of Ribosome-recycling factor from Solidesulfovibrio magneticus (strain ATCC 700980 / DSM 13731 / RS-1) (Desulfovibrio magneticus).